Consider the following 204-residue polypeptide: Prephenate decarboxylase (204 aa).

It belongs to the prephenate decarboxylase family.

It is found in the cytoplasm. It catalyses the reaction prephenate + H(+) = 3-[(4R)-4-hydroxycyclohexa-1,5-dien-1-yl]-2-oxopropanoate + CO2. It participates in antibiotic biosynthesis; bacilysin biosynthesis. Part of the bacABCDEF operon responsible for the biosynthesis of the nonribosomally synthesized dipeptide antibiotic bacilysin, composed of L-alanine and L-anticapsin. Bacilysin is an irreversible inactivator of the glutaminase domain of glucosamine synthetase. BacA is an unusual prephenate decarboxylase that avoids the typical aromatization of the cyclohexadienol ring of prephenate. BacA catalyzes the protonation of prephenate (1-carboxy-4-hydroxy-alpha-oxo-2,5-cyclohexadiene-1-propanoic acid) at C6 position, followed by a decarboxylation to produce the endocyclic-delta(4),delta(8)-7R-dihydro-hydroxyphenylpyruvate (en-H2HPP). En-H2HPP is able to undergo a slow nonenzymatic isomerization to produce the exocyclic-delta(3),delta(5)-dihydro-hydroxyphenylpyruvate (ex-H2HPP). BacA isomerizes only the pro-R double bond in prephenate. This Bacillus subtilis protein is Prephenate decarboxylase.